The following is a 376-amino-acid chain: S-adenosylmethionine synthase (376 aa).

His-15 contributes to the ATP binding site. Position 17 (Asp-17) interacts with Mg(2+). Glu-43 lines the K(+) pocket. Residues Glu-56 and Gln-92 each contribute to the L-methionine site. Residues 92 to 102 (QSKEIANQVDR) are flexible loop. ATP is bound by residues 156–158 (DMK), Asp-231, 237–238 (RK), Ala-254, and Lys-258. Asp-231 contacts L-methionine. Lys-262 contributes to the L-methionine binding site.

It belongs to the AdoMet synthase family. In terms of assembly, homotetramer; dimer of dimers. Mg(2+) serves as cofactor. K(+) is required as a cofactor.

The protein localises to the cytoplasm. It catalyses the reaction L-methionine + ATP + H2O = S-adenosyl-L-methionine + phosphate + diphosphate. It participates in amino-acid biosynthesis; S-adenosyl-L-methionine biosynthesis; S-adenosyl-L-methionine from L-methionine: step 1/1. Catalyzes the formation of S-adenosylmethionine (AdoMet) from methionine and ATP. The overall synthetic reaction is composed of two sequential steps, AdoMet formation and the subsequent tripolyphosphate hydrolysis which occurs prior to release of AdoMet from the enzyme. The polypeptide is S-adenosylmethionine synthase (Mycoplasmopsis pulmonis (strain UAB CTIP) (Mycoplasma pulmonis)).